We begin with the raw amino-acid sequence, 262 residues long: Ribosomal RNA small subunit methyltransferase A (262 aa).

S-adenosyl-L-methionine is bound by residues asparagine 12, leucine 14, glycine 38, glutamate 60, aspartate 83, and asparagine 102.

It belongs to the class I-like SAM-binding methyltransferase superfamily. rRNA adenine N(6)-methyltransferase family. RsmA subfamily.

It is found in the cytoplasm. The enzyme catalyses adenosine(1518)/adenosine(1519) in 16S rRNA + 4 S-adenosyl-L-methionine = N(6)-dimethyladenosine(1518)/N(6)-dimethyladenosine(1519) in 16S rRNA + 4 S-adenosyl-L-homocysteine + 4 H(+). Functionally, specifically dimethylates two adjacent adenosines (A1518 and A1519) in the loop of a conserved hairpin near the 3'-end of 16S rRNA in the 30S particle. May play a critical role in biogenesis of 30S subunits. The sequence is that of Ribosomal RNA small subunit methyltransferase A from Pelagibacter ubique (strain HTCC1062).